The sequence spans 145 residues: Protein SPMIP3 (145 aa).

The polypeptide is Protein SPMIP3 (Mus musculus (Mouse)).